The primary structure comprises 555 residues: Glucose-6-phosphate isomerase (555 aa).

E353 acts as the Proton donor in catalysis. Active-site residues include H384 and K516.

Belongs to the GPI family.

It localises to the cytoplasm. It carries out the reaction alpha-D-glucose 6-phosphate = beta-D-fructose 6-phosphate. The protein operates within carbohydrate biosynthesis; gluconeogenesis. It functions in the pathway carbohydrate degradation; glycolysis; D-glyceraldehyde 3-phosphate and glycerone phosphate from D-glucose: step 2/4. Its function is as follows. Catalyzes the reversible isomerization of glucose-6-phosphate to fructose-6-phosphate. The chain is Glucose-6-phosphate isomerase from Methylobacillus flagellatus (strain ATCC 51484 / DSM 6875 / VKM B-1610 / KT).